Reading from the N-terminus, the 513-residue chain is ATP synthase subunit alpha (513 aa).

169–176 (GDRQIGKS) contributes to the ATP binding site.

It belongs to the ATPase alpha/beta chains family. As to quaternary structure, F-type ATPases have 2 components, CF(1) - the catalytic core - and CF(0) - the membrane proton channel. CF(1) has five subunits: alpha(3), beta(3), gamma(1), delta(1), epsilon(1). CF(0) has three main subunits: a(1), b(2) and c(9-12). The alpha and beta chains form an alternating ring which encloses part of the gamma chain. CF(1) is attached to CF(0) by a central stalk formed by the gamma and epsilon chains, while a peripheral stalk is formed by the delta and b chains.

The protein localises to the cell inner membrane. The catalysed reaction is ATP + H2O + 4 H(+)(in) = ADP + phosphate + 5 H(+)(out). In terms of biological role, produces ATP from ADP in the presence of a proton gradient across the membrane. The alpha chain is a regulatory subunit. The sequence is that of ATP synthase subunit alpha from Colwellia psychrerythraea (strain 34H / ATCC BAA-681) (Vibrio psychroerythus).